A 357-amino-acid chain; its full sequence is Probable cinnamyl alcohol dehydrogenase 1 (357 aa).

Cys47 contacts Zn(2+). Thr49 provides a ligand contact to NADP(+). 7 residues coordinate Zn(2+): His69, Glu70, Cys100, Cys103, Cys106, Cys114, and Cys163. NADP(+)-binding positions include Thr167, 188–193 (GLGGVG), 211–216 (SSSNKK), Thr251, Gly275, and 298–300 (SFI).

This sequence belongs to the zinc-containing alcohol dehydrogenase family. In terms of assembly, homodimer. The cofactor is Zn(2+). Post-translationally, the N-terminus is blocked.

The catalysed reaction is (E)-cinnamyl alcohol + NADP(+) = (E)-cinnamaldehyde + NADPH + H(+). It catalyses the reaction (E)-coniferol + NADP(+) = (E)-coniferaldehyde + NADPH + H(+). The enzyme catalyses (E)-sinapyl alcohol + NADP(+) = (E)-sinapaldehyde + NADPH + H(+). It carries out the reaction (E)-4-coumaroyl alcohol + NADP(+) = (E)-4-coumaraldehyde + NADPH + H(+). The catalysed reaction is (E)-caffeyl alcohol + NADP(+) = (E)-caffeyl aldehyde + NADPH + H(+). It participates in aromatic compound metabolism; phenylpropanoid biosynthesis. Its function is as follows. Involved in lignin biosynthesis. Catalyzes the final step specific for the production of lignin monomers. Catalyzes the NADPH-dependent reduction of coniferaldehyde, 5-hydroxyconiferaldehyde, sinapaldehyde, 4-coumaraldehyde and caffeyl aldehyde to their respective alcohols. The polypeptide is Probable cinnamyl alcohol dehydrogenase 1 (Nicotiana tabacum (Common tobacco)).